The following is a 349-amino-acid chain: MSRVKVAVLGATGSVGQRFIQLLDHHPFFEITHLCASENSAGKTYGEVMKTRWKISSDIPAYAKNLVITTPDPAKTKDVVLAFSGLDSNVAGEVEKNYANAGIHIISNSKNHRMDPTVPILSAEVNSSHLEVLTSQKTKGKIITNSNCTIMGVTISLKPLLDRFGIESVMLFSMQAISGAGYPGVPTMDILGNVIPHIGGEEEKAEIEPLKCLGKVENGKILHADFSISAHCNRVPVFDGHTVCVSVKFKKKPSREEIISSWKDFSGEPQTLGLPLAPNPVILFREEEDRPQPRLDLDTGKGMTTVIGRLRPDPILDWKYVVLSHNTIRGAAGAALLNAELLYKKKFLG.

NADP(+) contacts are provided by residues 12–15 (TGSV) and 39–40 (NS). Arg-113 contributes to the phosphate binding site. The Acyl-thioester intermediate role is filled by Cys-148. Gln-175 serves as a coordination point for substrate. Residue 178-179 (SG) participates in NADP(+) binding. A substrate-binding site is contributed by Glu-201. Lys-204 provides a ligand contact to phosphate. Arg-234 is a binding site for substrate. Catalysis depends on His-241, which acts as the Proton acceptor. 326-327 (NT) contacts NADP(+).

It belongs to the aspartate-semialdehyde dehydrogenase family. Homodimer.

The catalysed reaction is L-aspartate 4-semialdehyde + phosphate + NADP(+) = 4-phospho-L-aspartate + NADPH + H(+). Its pathway is amino-acid biosynthesis; L-lysine biosynthesis via DAP pathway; (S)-tetrahydrodipicolinate from L-aspartate: step 2/4. It participates in amino-acid biosynthesis; L-methionine biosynthesis via de novo pathway; L-homoserine from L-aspartate: step 2/3. It functions in the pathway amino-acid biosynthesis; L-threonine biosynthesis; L-threonine from L-aspartate: step 2/5. Functionally, catalyzes the NADPH-dependent formation of L-aspartate-semialdehyde (L-ASA) by the reductive dephosphorylation of L-aspartyl-4-phosphate. This is Aspartate-semialdehyde dehydrogenase from Leptospira interrogans serogroup Icterohaemorrhagiae serovar copenhageni (strain Fiocruz L1-130).